A 486-amino-acid polypeptide reads, in one-letter code: ATP synthase subunit beta (486 aa).

170 to 177 (GGAGVGKT) contacts ATP.

This sequence belongs to the ATPase alpha/beta chains family. In terms of assembly, F-type ATPases have 2 components, CF(1) - the catalytic core - and CF(0) - the membrane proton channel. CF(1) has five subunits: alpha(3), beta(3), gamma(1), delta(1), epsilon(1). CF(0) has three main subunits: a(1), b(2) and c(9-12). The alpha and beta chains form an alternating ring which encloses part of the gamma chain. CF(1) is attached to CF(0) by a central stalk formed by the gamma and epsilon chains, while a peripheral stalk is formed by the delta and b chains.

It is found in the cell membrane. It catalyses the reaction ATP + H2O + 4 H(+)(in) = ADP + phosphate + 5 H(+)(out). In terms of biological role, produces ATP from ADP in the presence of a proton gradient across the membrane. The catalytic sites are hosted primarily by the beta subunits. This chain is ATP synthase subunit beta, found in Clavibacter sepedonicus (Clavibacter michiganensis subsp. sepedonicus).